Here is an 875-residue protein sequence, read N- to C-terminus: Phosphoenolpyruvate carboxylase (875 aa).

Catalysis depends on residues His137 and Lys542.

This sequence belongs to the PEPCase type 1 family. Mg(2+) serves as cofactor.

The enzyme catalyses oxaloacetate + phosphate = phosphoenolpyruvate + hydrogencarbonate. Forms oxaloacetate, a four-carbon dicarboxylic acid source for the tricarboxylic acid cycle. The chain is Phosphoenolpyruvate carboxylase from Pseudomonas putida (strain ATCC 700007 / DSM 6899 / JCM 31910 / BCRC 17059 / LMG 24140 / F1).